The sequence spans 287 residues: Protease HtpX (287 aa).

The next 2 membrane-spanning stretches (helical) occupy residues 4-24 (IFLL…VMSI) and 33-53 (GGLL…SLAI). Residue His-139 coordinates Zn(2+). Glu-140 is an active-site residue. His-143 lines the Zn(2+) pocket. 2 consecutive transmembrane segments (helical) span residues 154–174 (LIQG…AGII) and 195–215 (AVVF…VAYF). Residue Glu-220 coordinates Zn(2+).

It belongs to the peptidase M48B family. Zn(2+) is required as a cofactor.

The protein localises to the cell inner membrane. This chain is Protease HtpX, found in Shewanella baltica (strain OS223).